The chain runs to 233 residues: PEP2-like protein NECHADRAFT_97050 (233 aa).

The protein belongs to the PEP2 family.

Its function is as follows. May contribute to the ability of the fungus to cause disease on pea plants. The sequence is that of PEP2-like protein NECHADRAFT_97050 from Fusarium vanettenii (strain ATCC MYA-4622 / CBS 123669 / FGSC 9596 / NRRL 45880 / 77-13-4) (Fusarium solani subsp. pisi).